Here is a 209-residue protein sequence, read N- to C-terminus: Octanoyltransferase (209 aa).

The 180-residue stretch at 30–209 (DHEPEIIYLV…IQTEFNKIFK (180 aa)) folds into the BPL/LPL catalytic domain. Substrate-binding positions include 69–76 (RGGKFTFH), 143–145 (AIG), and 156–158 (GVA). Cysteine 174 acts as the Acyl-thioester intermediate in catalysis.

This sequence belongs to the LipB family.

The protein localises to the cytoplasm. It carries out the reaction octanoyl-[ACP] + L-lysyl-[protein] = N(6)-octanoyl-L-lysyl-[protein] + holo-[ACP] + H(+). The protein operates within protein modification; protein lipoylation via endogenous pathway; protein N(6)-(lipoyl)lysine from octanoyl-[acyl-carrier-protein]: step 1/2. Catalyzes the transfer of endogenously produced octanoic acid from octanoyl-acyl-carrier-protein onto the lipoyl domains of lipoate-dependent enzymes. Lipoyl-ACP can also act as a substrate although octanoyl-ACP is likely to be the physiological substrate. This chain is Octanoyltransferase, found in Rickettsia rickettsii (strain Iowa).